The following is a 452-amino-acid chain: Retinoid-inducible serine carboxypeptidase (452 aa).

The first 26 residues, 1-26 (MELALRRSPVPRWLLLLPLLLGLNAG), serve as a signal peptide directing secretion. Asn64 and Asn126 each carry an N-linked (GlcNAc...) asparagine glycan. Ser167 is a catalytic residue. Asn362 is a glycosylation site (N-linked (GlcNAc...) asparagine). Residues Asp371 and His431 contribute to the active site.

Belongs to the peptidase S10 family.

It is found in the secreted. In terms of biological role, may be involved in vascular wall and kidney homeostasis. This is Retinoid-inducible serine carboxypeptidase (SCPEP1) from Homo sapiens (Human).